A 644-amino-acid polypeptide reads, in one-letter code: Exoribonuclease 2 (644 aa).

The region spanning 189-516 (RQDLTALNFV…NHRLLKAVIK (328 aa)) is the RNB domain. The S1 motif domain occupies 561-643 (NTRFAAEIID…ETRSIIARPA (83 aa)).

It belongs to the RNR ribonuclease family. RNase II subfamily.

It localises to the cytoplasm. It catalyses the reaction Exonucleolytic cleavage in the 3'- to 5'-direction to yield nucleoside 5'-phosphates.. Functionally, involved in mRNA degradation. Hydrolyzes single-stranded polyribonucleotides processively in the 3' to 5' direction. The chain is Exoribonuclease 2 from Salmonella dublin (strain CT_02021853).